A 772-amino-acid polypeptide reads, in one-letter code: uncharacterized protein (772 aa).

The next 2 membrane-spanning stretches (helical) occupy residues 16–36 and 301–321; these read LITF…LFSY and IGWI…LFSW. Residues 670–768 form the HTH araC/xylS-type domain; it reads DNIIHIIHHE…GITPGNYRQQ (99 aa). 2 DNA-binding regions (H-T-H motif) span residues 687 to 708 and 735 to 758; these read DEIA…KKEM and VKDI…KKLE.

The protein localises to the cell membrane. This is an uncharacterized protein from Bacillus subtilis (strain 168).